Consider the following 956-residue polypeptide: Glycine dehydrogenase (decarboxylating) (956 aa).

Position 697 is an N6-(pyridoxal phosphate)lysine (lysine 697).

It belongs to the GcvP family. As to quaternary structure, the glycine cleavage system is composed of four proteins: P, T, L and H. Pyridoxal 5'-phosphate is required as a cofactor.

It catalyses the reaction N(6)-[(R)-lipoyl]-L-lysyl-[glycine-cleavage complex H protein] + glycine + H(+) = N(6)-[(R)-S(8)-aminomethyldihydrolipoyl]-L-lysyl-[glycine-cleavage complex H protein] + CO2. Functionally, the glycine cleavage system catalyzes the degradation of glycine. The P protein binds the alpha-amino group of glycine through its pyridoxal phosphate cofactor; CO(2) is released and the remaining methylamine moiety is then transferred to the lipoamide cofactor of the H protein. The polypeptide is Glycine dehydrogenase (decarboxylating) (Cereibacter sphaeroides (strain KD131 / KCTC 12085) (Rhodobacter sphaeroides)).